Consider the following 376-residue polypeptide: Chaperone protein DnaJ (376 aa).

Residues 5-70 enclose the J domain; it reads DYYEILGVSK…QKRAAYDQYG (66 aa). The CR-type zinc-finger motif lies at 131–209; it reads GVTKEIRIPT…CHGHGRVERS (79 aa). Zn(2+) is bound by residues cysteine 144, cysteine 147, cysteine 161, cysteine 164, cysteine 183, cysteine 186, cysteine 197, and cysteine 200. CXXCXGXG motif repeat units follow at residues 144 to 151, 161 to 168, 183 to 190, and 197 to 204; these read CDVCHGSG, CPTCHGSG, CPHCQGRG, and CNKCHGHG.

The protein belongs to the DnaJ family. In terms of assembly, homodimer. Zn(2+) serves as cofactor.

The protein resides in the cytoplasm. Functionally, participates actively in the response to hyperosmotic and heat shock by preventing the aggregation of stress-denatured proteins and by disaggregating proteins, also in an autonomous, DnaK-independent fashion. Unfolded proteins bind initially to DnaJ; upon interaction with the DnaJ-bound protein, DnaK hydrolyzes its bound ATP, resulting in the formation of a stable complex. GrpE releases ADP from DnaK; ATP binding to DnaK triggers the release of the substrate protein, thus completing the reaction cycle. Several rounds of ATP-dependent interactions between DnaJ, DnaK and GrpE are required for fully efficient folding. Also involved, together with DnaK and GrpE, in the DNA replication of plasmids through activation of initiation proteins. This is Chaperone protein DnaJ from Escherichia coli (strain K12 / MC4100 / BW2952).